A 314-amino-acid polypeptide reads, in one-letter code: tRNA pseudouridine synthase B (314 aa).

Asp-54 acts as the Nucleophile in catalysis.

The protein belongs to the pseudouridine synthase TruB family. Type 1 subfamily.

The enzyme catalyses uridine(55) in tRNA = pseudouridine(55) in tRNA. Its function is as follows. Responsible for synthesis of pseudouridine from uracil-55 in the psi GC loop of transfer RNAs. The sequence is that of tRNA pseudouridine synthase B from Cupriavidus metallidurans (strain ATCC 43123 / DSM 2839 / NBRC 102507 / CH34) (Ralstonia metallidurans).